The chain runs to 238 residues: Orotidine 5'-phosphate decarboxylase (238 aa).

Substrate is bound by residues D18, K40, 67–76 (DMKLLDIDNT), T122, R183, Q192, and R213. Catalysis depends on K69, which acts as the Proton donor.

It belongs to the OMP decarboxylase family. Type 1 subfamily. In terms of assembly, homodimer.

It catalyses the reaction orotidine 5'-phosphate + H(+) = UMP + CO2. It functions in the pathway pyrimidine metabolism; UMP biosynthesis via de novo pathway; UMP from orotate: step 2/2. Its function is as follows. Catalyzes the decarboxylation of orotidine 5'-monophosphate (OMP) to uridine 5'-monophosphate (UMP). The protein is Orotidine 5'-phosphate decarboxylase of Brucella canis (strain ATCC 23365 / NCTC 10854 / RM-666).